The primary structure comprises 193 residues: MTEIEKEEACSRLQQHYAQVLSLLGEDPKREGLLKTPLRVAKAMQFLTKGYNEDPEAILRAAMFEEDYQQMVIVKDIDFFSMCEHHMLPFFGKAHVGYIPNRYITGLSKLPRVVDVFARRLQVQERLTTQIKECIQNTLNPLGVIVVIEAQHMCMQMRGVEKQNSLTTTSDFTGAFEESTTREEFLNLIGRRR.

Residues Cys83, His86, and Cys154 each coordinate Zn(2+).

It belongs to the GTP cyclohydrolase I family. In terms of assembly, homomer.

It catalyses the reaction GTP + H2O = 7,8-dihydroneopterin 3'-triphosphate + formate + H(+). It functions in the pathway cofactor biosynthesis; 7,8-dihydroneopterin triphosphate biosynthesis; 7,8-dihydroneopterin triphosphate from GTP: step 1/1. In Porphyromonas gingivalis (strain ATCC 33277 / DSM 20709 / CIP 103683 / JCM 12257 / NCTC 11834 / 2561), this protein is GTP cyclohydrolase 1.